A 222-amino-acid chain; its full sequence is (4-{4-[2-(gamma-L-glutamylamino)ethyl]phenoxymethyl}furan-2-yl)methanamine synthase (222 aa).

It belongs to the MfnF family.

The enzyme catalyses gamma-L-glutamyltyramine + [5-(aminomethyl)furan-3-yl]methyl diphosphate = (4-{4-[2-(gamma-L-glutamylamino)ethyl]phenoxymethyl}furan-2-yl)methanamine + diphosphate. It functions in the pathway cofactor biosynthesis; methanofuran biosynthesis. Its function is as follows. Catalyzes the condensation between 5-(aminomethyl)-3-furanmethanol diphosphate (F1-PP) and gamma-glutamyltyramine to produce APMF-Glu. In Methanococcus vannielii, this protein is (4-{4-[2-(gamma-L-glutamylamino)ethyl]phenoxymethyl}furan-2-yl)methanamine synthase.